Here is a 135-residue protein sequence, read N- to C-terminus: Large ribosomal subunit protein uL16m (135 aa).

This sequence belongs to the universal ribosomal protein uL16 family.

The protein resides in the mitochondrion. In Marchantia polymorpha (Common liverwort), this protein is Large ribosomal subunit protein uL16m (RPL16).